Consider the following 216-residue polypeptide: uncharacterized protein (216 aa).

Residues 1-21 (MTIVHFVGSLFFFFFFSYIFF) traverse the membrane as a helical segment.

It is found in the membrane. This is an uncharacterized protein from Saccharomyces cerevisiae (strain ATCC 204508 / S288c) (Baker's yeast).